Here is an 86-residue protein sequence, read N- to C-terminus: Putative regulatory protein Desal_2819 (86 aa).

The protein belongs to the RemA family.

The polypeptide is Putative regulatory protein Desal_2819 (Maridesulfovibrio salexigens (strain ATCC 14822 / DSM 2638 / NCIMB 8403 / VKM B-1763) (Desulfovibrio salexigens)).